Here is a 289-residue protein sequence, read N- to C-terminus: MASEGDSIDYYELLGINEDAQDQEIHRAWRKTSLKYHPDKNPNDPKAAEKFHMLQLAYNALIDVQLRKAYDSERFAKLARKRREEAFNFQRKSMVDDLRERERQFYDSLEKKENERDRLQEKLRALQEESANLRRQRENRLREEQEQSKRRKQETPSSKISELDRSIRIRWKRKYADQVNDAYLRSIYSSFGTLQNVVIQKDISKEKKYVYSIIVFETLSSAYSAINAEKPSKIYDVQWLKPPKSNSNTPTEKDTTVEDYEEITIMRMKQKHKQKQKENERKATSTMNA.

The region spanning 9 to 74 (DYYELLGINE…QLRKAYDSER (66 aa)) is the J domain. The span at 129 to 148 (ESANLRRQRENRLREEQEQS) shows a compositional bias: basic and acidic residues. 2 disordered regions span residues 129–161 (ESAN…SKIS) and 269–289 (KQKH…TMNA).

It belongs to the DnaJ family. As to quaternary structure, belongs to the 40S cdc5-associated complex (or cwf complex), a spliceosome sub-complex reminiscent of a late-stage spliceosome composed of the U2, U5 and U6 snRNAs and at least brr2, cdc5, cwf2/prp3, cwf3/syf1, cwf4/syf3, cwf5/ecm2, spp42/cwf6, cwf7/spf27, cwf8, cwf9, cwf10, cwf11, cwf12, prp45/cwf13, cwf14, cwf15, cwf16, cwf17, cwf18, cwf19, cwf20, cwf21, cwf22, cwf23, cwf24, cwf25, cwf26, cyp7/cwf27, cwf28, cwf29/ist3, lea1, msl1, prp5/cwf1, prp10, prp12/sap130, prp17, prp22, sap61, sap62, sap114, sap145, slu7, smb1, smd1, smd3, smf1, smg1 and syf2.

The protein localises to the cytoplasm. It localises to the nucleus. Functionally, involved in pre-mRNA splicing. May be involved in endoplasmic reticulum-associated protein degradation (ERAD) and required for growth at low and high temperatures. In Schizosaccharomyces pombe (strain 972 / ATCC 24843) (Fission yeast), this protein is Pre-mRNA-splicing factor cwf23 (cwf23).